Here is a 284-residue protein sequence, read N- to C-terminus: Large ribosomal subunit protein uL2 (284 aa).

Disordered stretches follow at residues 28-50 (ELEGSSSKRSVRPNKKLSFFKKS) and 232-284 (RGTA…DRRK). The span at 36-46 (RSVRPNKKLSF) shows a compositional bias: basic residues. Basic and acidic residues predominate over residues 240-250 (DHPHGGGEGRH). Positions 264 to 284 (KGLKTRDKRKSNKWIVKDRRK) are enriched in basic residues.

This sequence belongs to the universal ribosomal protein uL2 family. Part of the 50S ribosomal subunit. Forms a bridge to the 30S subunit in the 70S ribosome.

Functionally, one of the primary rRNA binding proteins. Required for association of the 30S and 50S subunits to form the 70S ribosome, for tRNA binding and peptide bond formation. It has been suggested to have peptidyltransferase activity; this is somewhat controversial. Makes several contacts with the 16S rRNA in the 70S ribosome. The polypeptide is Large ribosomal subunit protein uL2 (Chlamydia muridarum (strain MoPn / Nigg)).